Here is a 45-residue protein sequence, read N- to C-terminus: MKVLSSLKSAKSRHKDCQIVKRKGRVFVICKTNPRFKAVQGKKKK.

This sequence belongs to the bacterial ribosomal protein bL36 family.

In Aliivibrio salmonicida (strain LFI1238) (Vibrio salmonicida (strain LFI1238)), this protein is Large ribosomal subunit protein bL36.